Here is a 192-residue protein sequence, read N- to C-terminus: Leucine-rich repeat-containing protein 51 (192 aa).

3 LRR repeats span residues 49-71 (SLTQ…NQVV), 80-101 (NLAW…LTTF), and 103-124 (NLSV…NKLA). The 39-residue stretch at 137–175 (NPIEEEKGYRQYVLCNLPRITTFDFSGVTRADRSTAEVW) folds into the LRRCT domain.

As to expression, widely expressed in adult and embryonic tissues. Expressed in the developing choroid plexus from 12.5 dpc and in the epithelium of the developing airway tract from 14.5 dpc. Also expressed in the postnatal inner ear.

Its subcellular location is the cytoplasm. The polypeptide is Leucine-rich repeat-containing protein 51 (Mus musculus (Mouse)).